We begin with the raw amino-acid sequence, 1759 residues long: Zinc finger protein castor homolog 1 (1759 aa).

Disordered stretches follow at residues Met-1–Lys-26 and Lys-46–Arg-175. Composition is skewed to basic and acidic residues over residues Pro-77–Ile-88 and Glu-137–Ser-160. Over residues Gly-161–Ala-171 the composition is skewed to polar residues. A Glycyl lysine isopeptide (Lys-Gly) (interchain with G-Cter in SUMO2) cross-link involves residue Lys-288. The tract at residues Ser-374–Leu-420 is disordered. Positions Ala-387–Ala-396 are enriched in pro residues. The segment covering Pro-397–Ala-406 has biased composition (low complexity). Pro residues predominate over residues Pro-407–Pro-417. 3 consecutive C2H2-type zinc fingers follow at residues Tyr-551 to His-575, Phe-610 to His-634, and Phe-668 to His-692. Disordered stretches follow at residues Thr-686–Asp-723, Ser-736–Leu-776, Val-824–Gly-843, and Ala-889–Ala-949. Residues Ser-687–Arg-698 are compositionally biased toward basic residues. Positions Ser-699 to Ala-712 are enriched in low complexity. Ser-720 and Ser-721 each carry phosphoserine. Low complexity predominate over residues Ser-736–Ala-764. The span at Ala-925 to Ser-939 shows a compositional bias: basic and acidic residues. Lys-975 participates in a covalent cross-link: Glycyl lysine isopeptide (Lys-Gly) (interchain with G-Cter in SUMO2). Ser-981 bears the Phosphoserine mark. A C2H2-type 4 zinc finger spans residues Phe-1031 to His-1055. Residues Thr-1067–Pro-1111 form a disordered region. Residues Pro-1081–Pro-1091 show a composition bias toward pro residues. A C2H2-type 5 zinc finger spans residues Phe-1300–His-1324. Residues Glu-1367–Ser-1392 form a disordered region. C2H2-type zinc fingers lie at residues Tyr-1457–His-1481, Phe-1515–His-1537, and Phe-1571–His-1595. 2 disordered regions span residues Asp-1589–Leu-1620 and Leu-1643–Arg-1736. Positions Ala-1655–Ser-1673 are enriched in low complexity. The segment covering Ser-1674–Leu-1723 has biased composition (acidic residues). Positions Pro-1724 to Arg-1736 are enriched in low complexity.

Expressed in heart, lung, skeletal muscle, pancreas, testis, small intestine, and stomach, but it is not detectable in the adult brain.

The protein localises to the nucleus. Its function is as follows. Transcriptional activator. Involved in vascular assembly and morphogenesis through direct transcriptional regulation of EGFL7. This Homo sapiens (Human) protein is Zinc finger protein castor homolog 1 (CASZ1).